We begin with the raw amino-acid sequence, 223 residues long: Probable transaldolase (223 aa).

The active-site Schiff-base intermediate with substrate is Lys-86.

This sequence belongs to the transaldolase family. Type 3B subfamily.

It localises to the cytoplasm. The catalysed reaction is D-sedoheptulose 7-phosphate + D-glyceraldehyde 3-phosphate = D-erythrose 4-phosphate + beta-D-fructose 6-phosphate. It participates in carbohydrate degradation; pentose phosphate pathway; D-glyceraldehyde 3-phosphate and beta-D-fructose 6-phosphate from D-ribose 5-phosphate and D-xylulose 5-phosphate (non-oxidative stage): step 2/3. Transaldolase is important for the balance of metabolites in the pentose-phosphate pathway. The protein is Probable transaldolase (tal) of Thermoplasma volcanium (strain ATCC 51530 / DSM 4299 / JCM 9571 / NBRC 15438 / GSS1).